A 492-amino-acid polypeptide reads, in one-letter code: Katanin p60 ATPase-containing subunit A1 (492 aa).

The interval 91 to 158 (PAHDGEVWSL…MKPVRAREKK (68 aa)) is disordered. Residues 138–147 (LPSSKNTNNV) are compositionally biased toward polar residues. 250–257 (GPPGTGKT) contributes to the ATP binding site.

The protein belongs to the AAA ATPase family. Katanin p60 subunit A1 subfamily. As to quaternary structure, can homooligomerize into hexameric rings, which may be promoted by interaction with microtubules. Interacts with katnb1, which may serve as a targeting subunit.

It localises to the cytoplasm. Its subcellular location is the cytoskeleton. The protein resides in the microtubule organizing center. It is found in the centrosome. The protein localises to the spindle pole. It localises to the spindle. The catalysed reaction is n ATP + n H2O + a microtubule = n ADP + n phosphate + (n+1) alpha/beta tubulin heterodimers.. Its activity is regulated as follows. ATPase activity is stimulated by microtubules, which promote homooligomerization. ATP-dependent microtubule severing is stimulated by interaction with katnb1. Catalytic subunit of a complex which severs microtubules in an ATP-dependent manner. Microtubule severing may promote rapid reorganization of cellular microtubule arrays and the release of microtubules from the centrosome following nucleation. The chain is Katanin p60 ATPase-containing subunit A1 (katna1) from Xenopus tropicalis (Western clawed frog).